A 272-amino-acid polypeptide reads, in one-letter code: Rhomboid-type serine protease B (272 aa).

Transmembrane regions (helical) follow at residues 30 to 50, 72 to 92, 103 to 123, 133 to 153, and 164 to 184; these read IVLL…WSVV, PFIH…TPLL, TAVA…YILV, AVVG…IKTF, and TKIP…IFVP. The active-site Nucleophile is Ser138. A glycan (N-linked (GlcNAc...) asparagine) is linked at Asn185. A helical transmembrane segment spans residues 186-206; sequence TSFLGHLSAIIIGYLLGLGYL. His191 is an active-site residue.

The protein belongs to the peptidase S54 family.

It is found in the membrane. The enzyme catalyses Cleaves type-1 transmembrane domains using a catalytic dyad composed of serine and histidine that are contributed by different transmembrane domains.. Its function is as follows. Rhomboid protease that catalyzes intramembrane proteolysis. Required for transcription factor srbA activation by mediating its release from the membrane and thereby regulating its activity under hypoxic conditions. Essential for iron homeostasis and resistance to azoles such as voriconazole. Required for virulence in murine models of invasive pulmonary aspergillosis (IPA). The chain is Rhomboid-type serine protease B from Aspergillus fumigatus (strain CBS 144.89 / FGSC A1163 / CEA10) (Neosartorya fumigata).